Here is a 109-residue protein sequence, read N- to C-terminus: Hainantoxin-XVIII-5 (109 aa).

The N-terminal stretch at 1–18 is a signal peptide; the sequence is MKLSIIIIATSLVIAVVA. The propeptide occupies 19 to 46; it reads FPSKDSKAIENDKTEQRMEIVVQETARA. 4 cysteine pairs are disulfide-bonded: Cys-47–Cys-62, Cys-55–Cys-68, Cys-59–Cys-108, and Cys-61–Cys-81.

Belongs to the neurotoxin 25 family. F7 subfamily. As to expression, expressed by the venom gland.

Its subcellular location is the secreted. In terms of biological role, putative ion channel inhibitor. In Cyriopagopus hainanus (Chinese bird spider), this protein is Hainantoxin-XVIII-5.